Here is a 212-residue protein sequence, read N- to C-terminus: Thymidylate kinase (212 aa).

10-17 provides a ligand contact to ATP; sequence GPDGAGKT.

It belongs to the thymidylate kinase family.

It carries out the reaction dTMP + ATP = dTDP + ADP. Phosphorylation of dTMP to form dTDP in both de novo and salvage pathways of dTTP synthesis. This is Thymidylate kinase from Enterococcus faecalis (strain ATCC 700802 / V583).